The following is a 381-amino-acid chain: Prokineticin receptor 2 (381 aa).

At 1 to 51 the chain is on the extracellular side; it reads MGPQNRNTSFAPDLNPPQDHVSLNYSYGDYDLPLGEDEDVTKTQTFFAAKI. Asn7 and Asn24 each carry an N-linked (GlcNAc...) asparagine glycan. A helical transmembrane segment spans residues 52–72; the sequence is VIGVALAGIMLVCGIGNFVFI. Topologically, residues 73–86 are cytoplasmic; it reads AALARYKKLRNLTN. A helical transmembrane segment spans residues 87–107; it reads LLIANLAISDFLVAIVCCPFE. Topologically, residues 108-133 are extracellular; it reads MDYYVVRQLSWAHGHVLCASVNYLRT. Cys125 and Cys205 are disulfide-bonded. The helical transmembrane segment at 134–154 threads the bilayer; the sequence is VSLYVSTNALLAIAIDRYLAI. The Cytoplasmic segment spans residues 155 to 168; that stretch reads VHPLKPRMNYQTAS. Residues 169–189 form a helical membrane-spanning segment; that stretch reads FLIALVWMVSILIAVPSAYFT. The Extracellular portion of the chain corresponds to 190–220; that stretch reads TETILVIVKNQEKIFCGQIWSVDQQLYYKSY. The helical transmembrane segment at 221-241 threads the bilayer; the sequence is FLFVFGLEFVGPVVTMTLCYA. The Cytoplasmic portion of the chain corresponds to 242–270; the sequence is RISQELWFKAVPGFQTEQIRKRLRCRRKT. The chain crosses the membrane as a helical span at residues 271–291; sequence VLLLMGILTAYVLCWAPFYGF. Residues 292–310 lie on the Extracellular side of the membrane; sequence TIVRDFFPTVVVKEKHYLT. A helical membrane pass occupies residues 311 to 331; it reads AFYVVECIAMSNSMINTICFV. Topologically, residues 332-381 are cytoplasmic; sequence TVKNNTMKYFKKMLRLHWRPSHYGSKSSADLDLKTSGVPATEEVDCIRLK.

It belongs to the G-protein coupled receptor 1 family. Homodimer. As to expression, expressed in several regions of the brain, including paraventricular hypothalamic nucleus, dorsal medial hypothalamic nucleus, paratenial thalamic nuclei, paracentral thalamic nucleus, lateral habenular nucleus, lateral septal nucleus, lateral globus pallidus and amygdala. Highest expression seen in paraventricular thalamic nuclei and is also extensively expressed in the suprachiasmatic nucleus.

It is found in the cell membrane. Its function is as follows. Receptor for prokineticin 2. Exclusively coupled to the G(q) subclass of heteromeric G proteins. Activation leads to mobilization of calcium, stimulation of phosphoinositide turnover and activation of p44/p42 mitogen-activated protein kinase. The protein is Prokineticin receptor 2 (Prokr2) of Mus musculus (Mouse).